Consider the following 627-residue polypeptide: uncharacterized protein (627 aa).

Disordered regions lie at residues 441-466 and 608-627; these read EAVPEGPDGGGPWLEDEPGRGAQGEN and DLRGTQFDYERGKGESTEDR. A compositionally biased stretch (basic and acidic residues) spans 615-627; the sequence is DYERGKGESTEDR.

This is an uncharacterized protein from Homo sapiens (Human).